The primary structure comprises 507 residues: Arabinose import ATP-binding protein AraG (507 aa).

2 ABC transporter domains span residues 14-249 (LRFN…MVGR) and 249-505 (RDIQ…LPRT). Residue 46–53 (GENGAGKS) participates in ATP binding.

Belongs to the ABC transporter superfamily. Arabinose importer (TC 3.A.1.2.2) family. In terms of assembly, the complex is composed of two ATP-binding proteins (AraG), two transmembrane proteins (AraH) and a solute-binding protein (AraF).

Its subcellular location is the cell inner membrane. It catalyses the reaction L-arabinose(out) + ATP + H2O = L-arabinose(in) + ADP + phosphate + H(+). Its function is as follows. Part of the ABC transporter complex AraFGH involved in arabinose import. Responsible for energy coupling to the transport system. In Pseudomonas syringae pv. syringae (strain B728a), this protein is Arabinose import ATP-binding protein AraG.